The chain runs to 456 residues: Enolase (456 aa).

(2R)-2-phosphoglycerate is bound at residue Gln-164. Glu-207 acts as the Proton donor in catalysis. Asp-244, Glu-287, and Asp-314 together coordinate Mg(2+). Lys-339, Arg-368, Ser-369, and Lys-390 together coordinate (2R)-2-phosphoglycerate. Lys-339 serves as the catalytic Proton acceptor.

This sequence belongs to the enolase family. In terms of assembly, component of the RNA degradosome, a multiprotein complex involved in RNA processing and mRNA degradation. Requires Mg(2+) as cofactor.

Its subcellular location is the cytoplasm. The protein resides in the secreted. It localises to the cell surface. The enzyme catalyses (2R)-2-phosphoglycerate = phosphoenolpyruvate + H2O. Its pathway is carbohydrate degradation; glycolysis; pyruvate from D-glyceraldehyde 3-phosphate: step 4/5. Its function is as follows. Catalyzes the reversible conversion of 2-phosphoglycerate (2-PG) into phosphoenolpyruvate (PEP). It is essential for the degradation of carbohydrates via glycolysis. This chain is Enolase, found in Francisella tularensis subsp. holarctica (strain LVS).